Reading from the N-terminus, the 261-residue chain is Small ribosomal subunit protein uS2 (261 aa).

An N-acetylserine modification is found at serine 2. The disordered stretch occupies residues 211-261; sequence EQNAAEDSKAEDAEEAPVADAEPDWSGETEDVDWAESGATPAAEEAAASNW. Residues 222–244 are compositionally biased toward acidic residues; that stretch reads DAEEAPVADAEPDWSGETEDVDW. Residues 245-261 are compositionally biased toward low complexity; sequence AESGATPAAEEAAASNW.

It belongs to the universal ribosomal protein uS2 family. Component of the small ribosomal subunit. Mature ribosomes consist of a small (40S) and a large (60S) subunit. The 40S subunit contains about 33 different proteins and 1 molecule of RNA (18S). The 60S subunit contains about 49 different proteins and 3 molecules of RNA (25S, 5.8S and 5S). Interacts with RPS21.

Its subcellular location is the cytoplasm. In terms of biological role, required for the assembly and/or stability of the 40S ribosomal subunit. Required for the processing of the 20S rRNA-precursor to mature 18S rRNA in a late step of the maturation of 40S ribosomal subunits. The polypeptide is Small ribosomal subunit protein uS2 (Meyerozyma guilliermondii (strain ATCC 6260 / CBS 566 / DSM 6381 / JCM 1539 / NBRC 10279 / NRRL Y-324) (Yeast)).